The sequence spans 413 residues: Multifunctional CCA protein (413 aa).

Positions 8 and 11 each coordinate ATP. Residues Gly8 and Arg11 each contribute to the CTP site. Positions 21 and 23 each coordinate Mg(2+). Residues Arg91, Arg143, and Arg146 each contribute to the ATP site. CTP contacts are provided by Arg91, Arg143, and Arg146. Residues 232 to 333 form the HD domain; the sequence is TGVHVMMVID…VRLLERADAL (102 aa).

It belongs to the tRNA nucleotidyltransferase/poly(A) polymerase family. Bacterial CCA-adding enzyme type 1 subfamily. In terms of assembly, monomer. Can also form homodimers and oligomers. It depends on Mg(2+) as a cofactor. Requires Ni(2+) as cofactor.

The enzyme catalyses a tRNA precursor + 2 CTP + ATP = a tRNA with a 3' CCA end + 3 diphosphate. It catalyses the reaction a tRNA with a 3' CCA end + 2 CTP + ATP = a tRNA with a 3' CCACCA end + 3 diphosphate. Catalyzes the addition and repair of the essential 3'-terminal CCA sequence in tRNAs without using a nucleic acid template. Adds these three nucleotides in the order of C, C, and A to the tRNA nucleotide-73, using CTP and ATP as substrates and producing inorganic pyrophosphate. tRNA 3'-terminal CCA addition is required both for tRNA processing and repair. Also involved in tRNA surveillance by mediating tandem CCA addition to generate a CCACCA at the 3' terminus of unstable tRNAs. While stable tRNAs receive only 3'-terminal CCA, unstable tRNAs are marked with CCACCA and rapidly degraded. This is Multifunctional CCA protein from Burkholderia pseudomallei (strain K96243).